The chain runs to 167 residues: Endoribonuclease YbeY (167 aa).

The disordered stretch occupies residues 64–101 (GKPTNVLSWPSEERASEEPGMAPEPPEPGDPEDPEPLG). The span at 90–99 (EPGDPEDPEP) shows a compositional bias: acidic residues. H131, H135, and H141 together coordinate Zn(2+).

Belongs to the endoribonuclease YbeY family. The cofactor is Zn(2+).

Its subcellular location is the cytoplasm. Its function is as follows. Single strand-specific metallo-endoribonuclease involved in late-stage 70S ribosome quality control and in maturation of the 3' terminus of the 16S rRNA. The chain is Endoribonuclease YbeY from Cereibacter sphaeroides (strain ATCC 17023 / DSM 158 / JCM 6121 / CCUG 31486 / LMG 2827 / NBRC 12203 / NCIMB 8253 / ATH 2.4.1.) (Rhodobacter sphaeroides).